The following is a 323-amino-acid chain: Sphingolipid delta(4)-desaturase DES1 (323 aa).

2 helical membrane-spanning segments follow: residues 41-61 (HNLIWIVSLMVLTQLVAFYLV) and 68-88 (WLLFWTYVVGSCISHSMTLAI). The Histidine box-1 motif lies at 89–93 (HEISH). Residues 104–124 (WNRCFGMFANLPLGLPYSVSF) form a helical membrane-spanning segment. Positions 128 to 132 (HMDHH) match the Histidine box-2 motif. The next 3 helical transmembrane spans lie at 152-172 (FFCTPLRKLVWIILQPLFYTI), 185-205 (LEIINLVVQFSFDALIYYTLG), and 210-230 (FYMLVGSILGLGLHPISGHFI). Positions 259 to 263 (HNEHH) match the Histidine box-3 motif.

Belongs to the fatty acid desaturase type 1 family. DEGS subfamily. Interacts with RLBP1; the interaction increases synthesis of chromophore-precursors by DEGS1.

The protein localises to the endoplasmic reticulum membrane. The catalysed reaction is an N-acylsphinganine + 2 Fe(II)-[cytochrome b5] + O2 + 2 H(+) = an N-acylsphing-4-enine + 2 Fe(III)-[cytochrome b5] + 2 H2O. It carries out the reaction all-trans-retinol = 11-cis-retinol. The enzyme catalyses all-trans-retinol = 9-cis-retinol. It catalyses the reaction all-trans-retinol = 13-cis-retinol. The catalysed reaction is 11-cis-retinol = 13-cis-retinol. It carries out the reaction 11-cis-retinol = 9-cis-retinol. Its function is as follows. Has sphingolipid-delta-4-desaturase activity. Converts D-erythro-sphinganine to D-erythro-sphingosine (E-sphing-4-enine). Catalyzes the equilibrium isomerization of retinols. In Xenopus tropicalis (Western clawed frog), this protein is Sphingolipid delta(4)-desaturase DES1 (degs1).